The chain runs to 454 residues: UPF0210 protein Cphy_2797 (454 aa).

Belongs to the UPF0210 family. In terms of assembly, homodimer.

The chain is UPF0210 protein Cphy_2797 from Lachnoclostridium phytofermentans (strain ATCC 700394 / DSM 18823 / ISDg) (Clostridium phytofermentans).